The primary structure comprises 283 residues: Probable endonuclease 4 (283 aa).

Zn(2+) is bound by residues His69, His113, Glu148, Asp182, His185, His217, Asp230, His232, and Glu262.

This sequence belongs to the AP endonuclease 2 family. Zn(2+) serves as cofactor.

It carries out the reaction Endonucleolytic cleavage to 5'-phosphooligonucleotide end-products.. Functionally, endonuclease IV plays a role in DNA repair. It cleaves phosphodiester bonds at apurinic or apyrimidinic (AP) sites, generating a 3'-hydroxyl group and a 5'-terminal sugar phosphate. The sequence is that of Probable endonuclease 4 from Bifidobacterium longum (strain NCC 2705).